A 605-amino-acid polypeptide reads, in one-letter code: Glucose oxidase (605 aa).

Residues 1–18 (MVSVFLSTLLLAAATVQA) form the signal peptide. FAD is bound by residues L52, T53, and E73. A glycan (N-linked (GlcNAc...) asparagine) is linked at N111. Residues S125, N129, G130, and S132 each coordinate FAD. N-linked (GlcNAc...) asparagine glycans are attached at residues N183 and N190. C186 and C228 form a disulfide bridge. V272 is an FAD binding site. 4 N-linked (GlcNAc...) asparagine glycosylation sites follow: N335, N375, N410, and N519. H538 acts as the Proton acceptor in catalysis. Residues K559 and V560 each coordinate O2. FAD is bound by residues G571 and M583.

Belongs to the GMC oxidoreductase family. Homodimer. FAD serves as cofactor.

It is found in the secreted. The protein localises to the cell wall. Its subcellular location is the cytoplasmic vesicle. The catalysed reaction is beta-D-glucose + O2 = D-glucono-1,5-lactone + H2O2. Glucose oxidase catalyzes the oxidation of beta-D-glucose to D-glucono-delta-lactone and hydrogen peroxide in the presence of molecular oxygen. D-glucono-delta-lactone is sequentially hydrolyzed by lactonase to D-gluconic acid, and the resulting hydrogen peroxide is hydrolyzed by catalase to oxygen and water. Glucose oxidase alone indirectly causes toxicity in the presence of glucose and is the active compound of the antifungal antibiotic talaron. Responsible for inhibition of germination of microsclerotia of Verticillium dahliae. This is Glucose oxidase from Talaromyces flavus.